A 695-amino-acid polypeptide reads, in one-letter code: RING finger protein 145 (695 aa).

The next 13 helical transmembrane spans lie at 53–73 (YLALNMHYVGYILSVVLLTLP), 77–97 (LAKLYLYFVAALLLYAGHQIS), 123–143 (FITALVGQLVVCTLCSCVMKT), 146–166 (IWLFSAHMLPLLARLCLVPIE), 168–188 (IVVINKFAMIFTGLEVLYFLA), 225–245 (LVVPVLFMVFWLVLFALQIYT), 275–295 (YSLLGLVFTVSFVALGVLTLC), 316–336 (TEGVTLLILAVQTGLIELQVV), 340–360 (FLLSIILFIVVASILQSMLEI), 384–404 (SLCLFLLVFPSYMAYMICQFF), 410–430 (LLIIISSSILTSLQVLGTLFI), 460–480 (LLEFLVALCVVAYGVSETVFG), and 482–502 (WTVMGSMIIFIHSYYNVWLRA). Residues 537–575 (CSICYQDMNSAVITPCSHFFHPGCLKKWLYVQETCPLCH) form an RING-type; atypical zinc finger. A compositionally biased stretch (polar residues) spans 585-603 (ATGESGSSTNPVSEQSATN). The disordered stretch occupies residues 585–610 (ATGESGSSTNPVSEQSATNPPLGPVS).

Its subcellular location is the membrane. The polypeptide is RING finger protein 145 (rnf145) (Xenopus tropicalis (Western clawed frog)).